The sequence spans 556 residues: Formate--tetrahydrofolate ligase 1 (556 aa).

65 to 72 (TPAGEGKS) serves as a coordination point for ATP.

The protein belongs to the formate--tetrahydrofolate ligase family.

The catalysed reaction is (6S)-5,6,7,8-tetrahydrofolate + formate + ATP = (6R)-10-formyltetrahydrofolate + ADP + phosphate. It participates in one-carbon metabolism; tetrahydrofolate interconversion. The polypeptide is Formate--tetrahydrofolate ligase 1 (Streptococcus pyogenes serotype M28 (strain MGAS6180)).